The following is a 105-amino-acid chain: MHIKKGDNVKVIAGKDKGKEGKVIATEPKKDRVVVEGVNVIKKHQKPTQLNPEGGILETEAAIHVSNVQLLDPKTNEPTRVGYKFVDGKKVRIVKKSGEEIKTNN.

This sequence belongs to the universal ribosomal protein uL24 family. Part of the 50S ribosomal subunit.

In terms of biological role, one of two assembly initiator proteins, it binds directly to the 5'-end of the 23S rRNA, where it nucleates assembly of the 50S subunit. Its function is as follows. One of the proteins that surrounds the polypeptide exit tunnel on the outside of the subunit. This is Large ribosomal subunit protein uL24 from Staphylococcus haemolyticus (strain JCSC1435).